A 619-amino-acid chain; its full sequence is Replication restart protein PriA (619 aa).

A Helicase ATP-binding domain is found at 119–285 (LKELQKHSAS…KDKALVRLKG (167 aa)). ATP is bound at residue 132–139 (GDTGSGKT). The DEAH box motif lies at 228–231 (DEEH). Zn(2+) is bound by residues Cys336, Cys339, Cys345, Cys348, Cys363, Cys366, Cys376, and Cys379. In terms of domain architecture, Helicase C-terminal spans 371–532 (PIPKICSACQ…ELYPPFSRLC (162 aa)).

It belongs to the helicase family. PriA subfamily. In terms of assembly, component of the replication restart primosome. Requires Zn(2+) as cofactor.

The catalysed reaction is Couples ATP hydrolysis with the unwinding of duplex DNA by translocating in the 3'-5' direction.. It catalyses the reaction ATP + H2O = ADP + phosphate + H(+). Functionally, initiates the restart of stalled replication forks, which reloads the replicative helicase on sites other than the origin of replication. Recognizes and binds to abandoned replication forks and remodels them to uncover a helicase loading site. Promotes assembly of the primosome at these replication forks. Important for survival of the bacteria in host cells. The protein is Replication restart protein PriA of Helicobacter pylori (strain ATCC 700392 / 26695) (Campylobacter pylori).